The primary structure comprises 258 residues: Ubiquinone/menaquinone biosynthesis C-methyltransferase UbiE (258 aa).

The interval 1-20 (MSESRTSADGGMETSYGFRE) is disordered. Residues T81, D102, and 130-131 (NA) each bind S-adenosyl-L-methionine.

It belongs to the class I-like SAM-binding methyltransferase superfamily. MenG/UbiE family.

The catalysed reaction is a 2-demethylmenaquinol + S-adenosyl-L-methionine = a menaquinol + S-adenosyl-L-homocysteine + H(+). The enzyme catalyses a 2-methoxy-6-(all-trans-polyprenyl)benzene-1,4-diol + S-adenosyl-L-methionine = a 5-methoxy-2-methyl-3-(all-trans-polyprenyl)benzene-1,4-diol + S-adenosyl-L-homocysteine + H(+). The protein operates within quinol/quinone metabolism; menaquinone biosynthesis; menaquinol from 1,4-dihydroxy-2-naphthoate: step 2/2. It participates in cofactor biosynthesis; ubiquinone biosynthesis. Functionally, methyltransferase required for the conversion of demethylmenaquinol (DMKH2) to menaquinol (MKH2) and the conversion of 2-polyprenyl-6-methoxy-1,4-benzoquinol (DDMQH2) to 2-polyprenyl-3-methyl-6-methoxy-1,4-benzoquinol (DMQH2). This chain is Ubiquinone/menaquinone biosynthesis C-methyltransferase UbiE, found in Rhizobium etli (strain CIAT 652).